We begin with the raw amino-acid sequence, 301 residues long: MINSIRIGTRNSPLALIQTNLVIQQIKQFFPDINCAIVPIITSGDLIQNKPLYDIGGKALFLKEIEQALLDKKIDLAVHSLKDVPGRIPEELVISAVLEREDPRDVFVCLNYKSIKELPQHSVIGSSAVRRKAFIQKIRPDLKVTIFRGNVDSRIKKLMTGEVDATILAYAGLKRLGAFNPEYCHLIEYSHMLPCVGQGVIAVEIRQNDNSMLEICNQINHLPTCELIKPERAFLEYLDANCRTPIGTYSQYLDADNIQTDFMLGNPDCSKITFHTEITNIKTSKEGGIKAAKMMLNQLKK.

An S-(dipyrrolylmethanemethyl)cysteine modification is found at Cys242.

This sequence belongs to the HMBS family. In terms of assembly, monomer. It depends on dipyrromethane as a cofactor.

It catalyses the reaction 4 porphobilinogen + H2O = hydroxymethylbilane + 4 NH4(+). It participates in porphyrin-containing compound metabolism; protoporphyrin-IX biosynthesis; coproporphyrinogen-III from 5-aminolevulinate: step 2/4. Its function is as follows. Tetrapolymerization of the monopyrrole PBG into the hydroxymethylbilane pre-uroporphyrinogen in several discrete steps. This chain is Porphobilinogen deaminase, found in Rickettsia akari (strain Hartford).